We begin with the raw amino-acid sequence, 361 residues long: UDP-N-acetylglucosamine--N-acetylmuramyl-(pentapeptide) pyrophosphoryl-undecaprenol N-acetylglucosamine transferase (361 aa).

Residues 11–13 (TGG), Asn-120, Arg-161, Ser-188, and Gln-282 contribute to the UDP-N-acetyl-alpha-D-glucosamine site.

The protein belongs to the glycosyltransferase 28 family. MurG subfamily.

The protein localises to the cell inner membrane. It catalyses the reaction di-trans,octa-cis-undecaprenyl diphospho-N-acetyl-alpha-D-muramoyl-L-alanyl-D-glutamyl-meso-2,6-diaminopimeloyl-D-alanyl-D-alanine + UDP-N-acetyl-alpha-D-glucosamine = di-trans,octa-cis-undecaprenyl diphospho-[N-acetyl-alpha-D-glucosaminyl-(1-&gt;4)]-N-acetyl-alpha-D-muramoyl-L-alanyl-D-glutamyl-meso-2,6-diaminopimeloyl-D-alanyl-D-alanine + UDP + H(+). It participates in cell wall biogenesis; peptidoglycan biosynthesis. Cell wall formation. Catalyzes the transfer of a GlcNAc subunit on undecaprenyl-pyrophosphoryl-MurNAc-pentapeptide (lipid intermediate I) to form undecaprenyl-pyrophosphoryl-MurNAc-(pentapeptide)GlcNAc (lipid intermediate II). The chain is UDP-N-acetylglucosamine--N-acetylmuramyl-(pentapeptide) pyrophosphoryl-undecaprenol N-acetylglucosamine transferase from Prochlorococcus marinus (strain MIT 9303).